We begin with the raw amino-acid sequence, 101 residues long: Small ribosomal subunit protein bS18c (101 aa).

The span at 1–19 shows a compositional bias: basic residues; it reads MDKSKQLFRKSKRSFRRRL. The segment at 1-23 is disordered; that stretch reads MDKSKQLFRKSKRSFRRRLPPIG.

The protein belongs to the bacterial ribosomal protein bS18 family. Part of the 30S ribosomal subunit.

It is found in the plastid. It localises to the chloroplast. This Acorus calamus (Sweet flag) protein is Small ribosomal subunit protein bS18c.